The primary structure comprises 208 residues: ATP phosphoribosyltransferase (208 aa).

This sequence belongs to the ATP phosphoribosyltransferase family. Short subfamily. In terms of assembly, heteromultimer composed of HisG and HisZ subunits.

It localises to the cytoplasm. The enzyme catalyses 1-(5-phospho-beta-D-ribosyl)-ATP + diphosphate = 5-phospho-alpha-D-ribose 1-diphosphate + ATP. Its pathway is amino-acid biosynthesis; L-histidine biosynthesis; L-histidine from 5-phospho-alpha-D-ribose 1-diphosphate: step 1/9. Functionally, catalyzes the condensation of ATP and 5-phosphoribose 1-diphosphate to form N'-(5'-phosphoribosyl)-ATP (PR-ATP). Has a crucial role in the pathway because the rate of histidine biosynthesis seems to be controlled primarily by regulation of HisG enzymatic activity. This chain is ATP phosphoribosyltransferase, found in Oceanobacillus iheyensis (strain DSM 14371 / CIP 107618 / JCM 11309 / KCTC 3954 / HTE831).